The chain runs to 344 residues: Aurora kinase B (344 aa).

Threonine 35 carries the post-translational modification Phosphothreonine. The segment at asparagine 46–proline 65 is disordered. Serine 62 bears the Phosphoserine mark. Residue threonine 64 is modified to Phosphothreonine. The region spanning phenylalanine 77–valine 327 is the Protein kinase domain. Residues leucine 83–valine 91 and lysine 106 each bind ATP. Residue aspartate 200 is the Proton acceptor of the active site. An N6-acetyllysine modification is found at lysine 215. Serine 227 is modified (phosphoserine). Position 232 is a phosphothreonine; by autocatalysis (threonine 232).

The protein belongs to the protein kinase superfamily. Ser/Thr protein kinase family. Aurora subfamily. Component of the chromosomal passenger complex (CPC) composed of at least BIRC5/survivin, CDCA8/borealin, INCENP, AURKB or AURKC; predominantly independent AURKB- and AURKC-containing complexes exist. Associates with RACGAP1 during M phase. Interacts with SPDYC; this interaction may be required for proper localization of active, Thr-232-phosphorylated AURKB form during prometaphase and metaphase. Interacts with p53/TP53. Interacts (via the middle kinase domain) with NOC2L (via the N- and C-terminus domains). Interacts with CDCA1. Interacts with EVI5. Interacts with JTB. Interacts with NDC80. Interacts with PSMA3. Interacts with RNF2/RING1B. Interacts with SEPTIN1. Interacts with SIRT2. Interacts with TACC1. Interacts with TTC28. The phosphorylation of Thr-232 requires the binding to INCENP and occurs by means of an autophosphorylation mechanism. Thr-232 phosphorylation is indispensable for the AURKB kinase activity. In terms of processing, acetylated at Lys-215 by KAT5 at kinetochores, increasing AURKB activity and promoting accurate chromosome segregation in mitosis. Post-translationally, ubiquitinated by different BCR (BTB-CUL3-RBX1) E3 ubiquitin ligase complexes. Ubiquitinated by the BCR(KLHL9-KLHL13) E3 ubiquitin ligase complex, ubiquitination leads to removal from mitotic chromosomes and is required for cytokinesis. During anaphase, the BCR(KLHL21) E3 ubiquitin ligase complex recruits the CPC complex from chromosomes to the spindle midzone and mediates the ubiquitination of AURKB. Ubiquitination of AURKB by BCR(KLHL21) E3 ubiquitin ligase complex may not lead to its degradation by the proteasome. Deubiquitinated by USP35; inhibiting CDH1-mediated degradation of AURKB.

The protein localises to the nucleus. Its subcellular location is the chromosome. It localises to the centromere. The protein resides in the kinetochore. It is found in the cytoplasm. The protein localises to the cytoskeleton. Its subcellular location is the spindle. It localises to the midbody. The enzyme catalyses L-seryl-[protein] + ATP = O-phospho-L-seryl-[protein] + ADP + H(+). The catalysed reaction is L-threonyl-[protein] + ATP = O-phospho-L-threonyl-[protein] + ADP + H(+). With respect to regulation, activity is greatly increased when AURKB is within the CPC complex. In particular, AURKB-phosphorylated INCENP acts as an activator of AURKB. Positive feedback between HASPIN and AURKB contributes to CPC localization. Its function is as follows. Serine/threonine-protein kinase component of the chromosomal passenger complex (CPC), a complex that acts as a key regulator of mitosis. The CPC complex has essential functions at the centromere in ensuring correct chromosome alignment and segregation and is required for chromatin-induced microtubule stabilization and spindle assembly. Involved in the bipolar attachment of spindle microtubules to kinetochores and is a key regulator for the onset of cytokinesis during mitosis. Required for central/midzone spindle assembly and cleavage furrow formation. Key component of the cytokinesis checkpoint, a process required to delay abscission to prevent both premature resolution of intercellular chromosome bridges and accumulation of DNA damage: phosphorylates CHMP4C, leading to retain abscission-competent VPS4 (VPS4A and/or VPS4B) at the midbody ring until abscission checkpoint signaling is terminated at late cytokinesis. AURKB phosphorylates the CPC complex subunits BIRC5/survivin, CDCA8/borealin and INCENP. Phosphorylation of INCENP leads to increased AURKB activity. Other known AURKB substrates involved in centromeric functions and mitosis are CENPA, DES/desmin, GPAF, KIF2C, NSUN2, RACGAP1, SEPTIN1, VIM/vimentin, HASPIN, and histone H3. A positive feedback loop involving HASPIN and AURKB contributes to localization of CPC to centromeres. Phosphorylation of VIM controls vimentin filament segregation in cytokinetic process, whereas histone H3 is phosphorylated at 'Ser-10' and 'Ser-28' during mitosis (H3S10ph and H3S28ph, respectively). AURKB is also required for kinetochore localization of BUB1 and SGO1. Phosphorylation of p53/TP53 negatively regulates its transcriptional activity. Key regulator of active promoters in resting B- and T-lymphocytes: acts by mediating phosphorylation of H3S28ph at active promoters in resting B-cells, inhibiting RNF2/RING1B-mediated ubiquitination of histone H2A and enhancing binding and activity of the USP16 deubiquitinase at transcribed genes. Acts as an inhibitor of CGAS during mitosis: catalyzes phosphorylation of the N-terminus of CGAS during the G2-M transition, blocking CGAS liquid phase separation and activation, and thereby preventing CGAS-induced autoimmunity. Phosphorylates KRT5 during anaphase and telophase. Phosphorylates ATXN10 which promotes phosphorylation of ATXN10 by PLK1 and may play a role in the regulation of cytokinesis and stimulating the proteasomal degradation of ATXN10. This is Aurora kinase B (AURKB) from Bos taurus (Bovine).